A 508-amino-acid chain; its full sequence is Photosystem II CP47 reaction center protein (508 aa).

6 helical membrane-spanning segments follow: residues 21 to 36 (SVHI…WAGS), 101 to 115 (IVFS…IWHW), 140 to 156 (GIHL…FGAF), 203 to 218 (IAAG…FHLS), 237 to 252 (VLSS…AFVV), and 457 to 472 (SFAL…HGAR).

This sequence belongs to the PsbB/PsbC family. PsbB subfamily. PSII is composed of 1 copy each of membrane proteins PsbA, PsbB, PsbC, PsbD, PsbE, PsbF, PsbH, PsbI, PsbJ, PsbK, PsbL, PsbM, PsbT, PsbX, PsbY, PsbZ, Psb30/Ycf12, at least 3 peripheral proteins of the oxygen-evolving complex and a large number of cofactors. It forms dimeric complexes. Binds multiple chlorophylls. PSII binds additional chlorophylls, carotenoids and specific lipids. is required as a cofactor.

Its subcellular location is the plastid. The protein resides in the chloroplast thylakoid membrane. One of the components of the core complex of photosystem II (PSII). It binds chlorophyll and helps catalyze the primary light-induced photochemical processes of PSII. PSII is a light-driven water:plastoquinone oxidoreductase, using light energy to abstract electrons from H(2)O, generating O(2) and a proton gradient subsequently used for ATP formation. This is Photosystem II CP47 reaction center protein from Manihot esculenta (Cassava).